Here is a 604-residue protein sequence, read N- to C-terminus: UvrABC system protein C (604 aa).

The region spanning 13 to 92 is the GIY-YIG domain; sequence ASPGVYLMKD…IKKYHPKYNV (80 aa). Positions 205–240 constitute a UVR domain; the sequence is SEIVQDLEKSIEKASKEQKFEQAGMYYRTLKLIQQA.

The protein belongs to the UvrC family. Interacts with UvrB in an incision complex.

Its subcellular location is the cytoplasm. Its function is as follows. The UvrABC repair system catalyzes the recognition and processing of DNA lesions. UvrC both incises the 5' and 3' sides of the lesion. The N-terminal half is responsible for the 3' incision and the C-terminal half is responsible for the 5' incision. The sequence is that of UvrABC system protein C from Chlamydia abortus (strain DSM 27085 / S26/3) (Chlamydophila abortus).